Reading from the N-terminus, the 205-residue chain is ATP synthase subunit b (205 aa).

Residues 45–65 (LGMTATAWVSLAMVIVILLLL) form a helical membrane-spanning segment.

It belongs to the ATPase B chain family. As to quaternary structure, F-type ATPases have 2 components, F(1) - the catalytic core - and F(0) - the membrane proton channel. F(1) has five subunits: alpha(3), beta(3), gamma(1), delta(1), epsilon(1). F(0) has three main subunits: a(1), b(2) and c(10-14). The alpha and beta chains form an alternating ring which encloses part of the gamma chain. F(1) is attached to F(0) by a central stalk formed by the gamma and epsilon chains, while a peripheral stalk is formed by the delta and b chains.

Its subcellular location is the cell inner membrane. F(1)F(0) ATP synthase produces ATP from ADP in the presence of a proton or sodium gradient. F-type ATPases consist of two structural domains, F(1) containing the extramembraneous catalytic core and F(0) containing the membrane proton channel, linked together by a central stalk and a peripheral stalk. During catalysis, ATP synthesis in the catalytic domain of F(1) is coupled via a rotary mechanism of the central stalk subunits to proton translocation. Its function is as follows. Component of the F(0) channel, it forms part of the peripheral stalk, linking F(1) to F(0). This chain is ATP synthase subunit b, found in Rhizorhabdus wittichii (strain DSM 6014 / CCUG 31198 / JCM 15750 / NBRC 105917 / EY 4224 / RW1) (Sphingomonas wittichii).